The chain runs to 364 residues: Probable dual-specificity RNA methyltransferase RlmN (364 aa).

The active-site Proton acceptor is E107. Residues 113–346 form the Radical SAM core domain; that stretch reads HEYGNSVCVT…ATIRREQGSD (234 aa). C120 and C351 are oxidised to a cystine. The [4Fe-4S] cluster site is built by C127, C131, and C134. S-adenosyl-L-methionine-binding positions include 177-178, S209, 232-234, and N308; these read GE and SLH. C351 acts as the S-methylcysteine intermediate in catalysis.

It belongs to the radical SAM superfamily. RlmN family. [4Fe-4S] cluster serves as cofactor.

The protein localises to the cytoplasm. It catalyses the reaction adenosine(2503) in 23S rRNA + 2 reduced [2Fe-2S]-[ferredoxin] + 2 S-adenosyl-L-methionine = 2-methyladenosine(2503) in 23S rRNA + 5'-deoxyadenosine + L-methionine + 2 oxidized [2Fe-2S]-[ferredoxin] + S-adenosyl-L-homocysteine. The enzyme catalyses adenosine(37) in tRNA + 2 reduced [2Fe-2S]-[ferredoxin] + 2 S-adenosyl-L-methionine = 2-methyladenosine(37) in tRNA + 5'-deoxyadenosine + L-methionine + 2 oxidized [2Fe-2S]-[ferredoxin] + S-adenosyl-L-homocysteine. In terms of biological role, specifically methylates position 2 of adenine 2503 in 23S rRNA and position 2 of adenine 37 in tRNAs. Confers resistance to some classes of antibiotics. The polypeptide is Probable dual-specificity RNA methyltransferase RlmN (Staphylococcus epidermidis (strain ATCC 35984 / DSM 28319 / BCRC 17069 / CCUG 31568 / BM 3577 / RP62A)).